The sequence spans 126 residues: Putative gene 48 protein (126 aa).

The protein is Putative gene 48 protein (48) of Bacillus phage SP01 (Bacteriophage SP01).